Consider the following 177-residue polypeptide: ATP-dependent protease subunit HslV (177 aa).

Threonine 2 is a catalytic residue. Residues alanine 159, aspartate 162, and threonine 165 each coordinate Na(+).

This sequence belongs to the peptidase T1B family. HslV subfamily. A double ring-shaped homohexamer of HslV is capped on each side by a ring-shaped HslU homohexamer. The assembly of the HslU/HslV complex is dependent on binding of ATP.

The protein resides in the cytoplasm. It carries out the reaction ATP-dependent cleavage of peptide bonds with broad specificity.. With respect to regulation, allosterically activated by HslU binding. Its function is as follows. Protease subunit of a proteasome-like degradation complex believed to be a general protein degrading machinery. The chain is ATP-dependent protease subunit HslV from Lactobacillus leichmannii.